Consider the following 177-residue polypeptide: Large ribosomal subunit protein uL6 (177 aa).

It belongs to the universal ribosomal protein uL6 family. Part of the 50S ribosomal subunit.

This protein binds to the 23S rRNA, and is important in its secondary structure. It is located near the subunit interface in the base of the L7/L12 stalk, and near the tRNA binding site of the peptidyltransferase center. This chain is Large ribosomal subunit protein uL6, found in Methylobacterium sp. (strain 4-46).